The following is a 329-amino-acid chain: Very long chain fatty acid elongase 7 (329 aa).

Transmembrane regions (helical) follow at residues 26-46, 66-86, 114-134, 146-166, 170-190, 205-225, and 233-253; these read YPLMSSPFPTIAISLTYAYIV, LIVYNAAQVIFSAWLFYESCI, GCWWYYFSKFTEFFDTFFFVM, VIHHGIMPVSVWWGVKFTPGG, FFGFLNTFVHIFMYAYYMLAA, LTVMQMIQFVLVMVHSFQLFF, and IGFAYFIGAHAVMFYFLFSNF.

It belongs to the ELO family.

The protein resides in the membrane. It catalyses the reaction a very-long-chain acyl-CoA + malonyl-CoA + H(+) = a very-long-chain 3-oxoacyl-CoA + CO2 + CoA. Catalyzes the first and rate-limiting reaction of the four reactions that constitute the long-chain fatty acids elongation cycle. This endoplasmic reticulum-bound enzymatic process allows the addition of 2 carbons to the chain of long- and very long-chain fatty acids (VLCFAs) per cycle. This chain is Very long chain fatty acid elongase 7, found in Drosophila melanogaster (Fruit fly).